The primary structure comprises 327 residues: Homoserine kinase (327 aa).

The protein belongs to the pseudomonas-type ThrB family.

It carries out the reaction L-homoserine + ATP = O-phospho-L-homoserine + ADP + H(+). Its pathway is amino-acid biosynthesis; L-threonine biosynthesis; L-threonine from L-aspartate: step 4/5. This Bradyrhizobium diazoefficiens (strain JCM 10833 / BCRC 13528 / IAM 13628 / NBRC 14792 / USDA 110) protein is Homoserine kinase.